The primary structure comprises 116 residues: Large ribosomal subunit protein uL18 (116 aa).

This sequence belongs to the universal ribosomal protein uL18 family. In terms of assembly, part of the 50S ribosomal subunit; part of the 5S rRNA/L5/L18/L25 subcomplex. Contacts the 5S and 23S rRNAs.

This is one of the proteins that bind and probably mediate the attachment of the 5S RNA into the large ribosomal subunit, where it forms part of the central protuberance. The protein is Large ribosomal subunit protein uL18 of Shewanella halifaxensis (strain HAW-EB4).